Consider the following 881-residue polypeptide: Protein translocase subunit SecA (881 aa).

Residues Gln-83, 101 to 105 (GEGKT), and Asp-492 each bind ATP.

This sequence belongs to the SecA family.

The protein localises to the plastid. Its subcellular location is the chloroplast stroma. It is found in the chloroplast thylakoid membrane. The catalysed reaction is ATP + H2O + cellular proteinSide 1 = ADP + phosphate + cellular proteinSide 2.. Its function is as follows. Has a central role in coupling the hydrolysis of ATP to the transfer of proteins across the thylakoid membrane. The protein is Protein translocase subunit SecA of Emiliania huxleyi (Coccolithophore).